The sequence spans 397 residues: Stearoyl-[acyl-carrier-protein] 9-desaturase, chloroplastic (397 aa).

Residues 1–33 constitute a chloroplast transit peptide; the sequence is MALNFNAIASKSQKLPCFALPPKATLRSPKFSM. The Fe cation site is built by E138, E176, H179, E229, E262, and H265.

Belongs to the fatty acid desaturase type 2 family. As to quaternary structure, homodimer. Fe(2+) serves as cofactor.

It is found in the plastid. The protein resides in the chloroplast. It catalyses the reaction octadecanoyl-[ACP] + 2 reduced [2Fe-2S]-[ferredoxin] + O2 + 2 H(+) = (9Z)-octadecenoyl-[ACP] + 2 oxidized [2Fe-2S]-[ferredoxin] + 2 H2O. The protein operates within lipid metabolism; fatty acid metabolism. Functionally, converts stearoyl-ACP to oleoyl-ACP by introduction of a cis double bond between carbons 9 and 10 of the acyl chain. This Gossypium hirsutum (Upland cotton) protein is Stearoyl-[acyl-carrier-protein] 9-desaturase, chloroplastic.